A 173-amino-acid chain; its full sequence is UPF0102 protein Psyc_1908 (173 aa).

It belongs to the UPF0102 family.

This chain is UPF0102 protein Psyc_1908, found in Psychrobacter arcticus (strain DSM 17307 / VKM B-2377 / 273-4).